A 176-amino-acid chain; its full sequence is Natural cytotoxicity triggering receptor 3 (176 aa).

The N-terminal stretch at 1-18 (MAWMLLLILIMVYPGSCA) is a signal peptide. Residues 19-126 (LWVSQPPEIR…VGTGNGTRLV (108 aa)) form the Ig-like domain. The Extracellular segment spans residues 19 to 135 (LWVSQPPEIR…VVEKEYPQLG (117 aa)). The cysteines at positions 39 and 108 are disulfide-linked. N-linked (GlcNAc...) asparagine glycans are attached at residues asparagine 42 and asparagine 121. A helical transmembrane segment spans residues 136-156 (AGTVLLLRAGFYAVSFLSVAV). Topologically, residues 157 to 176 (GSTLYYQGKCHCHMGTHCHS) are cytoplasmic.

The protein belongs to the natural cytotoxicity receptor (NCR) family. As to quaternary structure, homodimer in the unliganted form. Interacts with CD3Z. Interacts with and is activated by binding to NCR3LG1. Interacts with and is activated by binding to BAG6. Interacts with and is inhibited by binding to LGALS3.

It is found in the cell membrane. Its function is as follows. Cell membrane receptor of natural killer/NK cells that is activated by binding of extracellular ligands including BAG6 and NCR3LG1. Stimulates NK cells cytotoxicity toward neighboring cells producing these ligands. It controls, for instance, NK cells cytotoxicity against tumor cells. Engagement of NCR3 by BAG6 also promotes myeloid dendritic cells (DC) maturation, both through killing DCs that did not acquire a mature phenotype, and inducing the release by NK cells of TNFA and IFNG that promote DC maturation. The polypeptide is Natural cytotoxicity triggering receptor 3 (NCR3) (Macaca fascicularis (Crab-eating macaque)).